The chain runs to 203 residues: Thymidylate kinase (203 aa).

7–14 (GGEGAGKT) lines the ATP pocket.

The protein belongs to the thymidylate kinase family.

The enzyme catalyses dTMP + ATP = dTDP + ADP. In terms of biological role, phosphorylation of dTMP to form dTDP in both de novo and salvage pathways of dTTP synthesis. The sequence is that of Thymidylate kinase from Chlamydia trachomatis serovar L2 (strain ATCC VR-902B / DSM 19102 / 434/Bu).